Reading from the N-terminus, the 447-residue chain is MALISRPRAPLWLGRLSRRLCGRHQACMGTMARPRRFTVELPDCSLTHFVLGDATDHRDARLAELLGPPGRSYALCVPLAPGEGCGPRVQAARVHHRLLQQLRRGPLQRCQLSKLLGYGPGDQAGEAQHGFLLRDPCDHPDTRRDLLQLLGSCQEAARPQLAEFQADSQGLLWQRLWELQGDRQVQVDCACVLPAQEPHLHPLLPDLLNSAVFQDRDAARAVLEECTSFIPEARAVLDLVDQCPKEVQKGKFQVIAIEGLDATGKTTLTQSVSESLKAVLLQSPPPCISQWRKIFDDEPTIIRRAFYSLGNYLVASEIAKESTNFPVIVDRYWHSTATYAIATEVSGGLQYLPPAHHPVYQWPGDLLKPDLVLLLTVNSEERVRRLQGRGQEKTKEEAELEANNVFRQKVEMTYQRMENPSCHLVDASPSRETVLQKVLELIQSSGR.

A mitochondrion-targeting transit peptide spans 1-73; the sequence is MALISRPRAP…ELLGPPGRSY (73 aa). 259–266 lines the ATP pocket; it reads GLDATGKT. Residues 380–412 are a coiled coil; sequence EERVRRLQGRGQEKTKEEAELEANNVFRQKVEM.

Belongs to the thymidylate kinase family. In terms of tissue distribution, strongly expressed in the brain.

Its subcellular location is the mitochondrion. The enzyme catalyses CMP + ATP = CDP + ADP. It catalyses the reaction dCMP + ATP = dCDP + ADP. It carries out the reaction a 2'-deoxyribonucleoside 5'-diphosphate + ATP = a 2'-deoxyribonucleoside 5'-triphosphate + ADP. The catalysed reaction is a ribonucleoside 5'-diphosphate + ATP = a ribonucleoside 5'-triphosphate + ADP. Functionally, mitochondrial nucleotide monophosphate kinase needed for salvage dNTP synthesis that mediates immunomodulatory and antiviral activities through IFN-dependent and IFN-independent pathways. Restricts the replication of multiple viruses including flaviviruses or coronaviruses. Together with viperin/RSAD2 and ddhCTP, suppresses the replication of several coronaviruses through inhibition of the viral RNA-dependent RNA polymerase activities. Concerning flaviviruses, restricts RNA translation when localized to the mitochondria independently of its kinase activity. Is able to phosphorylate dUMP, dCMP, CMP, UMP and monophosphates of the pyrimidine nucleoside analogs ddC, dFdC, araC, BVDU and FdUrd with ATP as phosphate donor. Efficacy is highest for dUMP followed by dCMP while CMP and UMP are poor substrates. Controls therefore mitochondrial DNA synthesis by supplying required deoxyribonucleotides. CMPK2-dependent mitochondrial DNA synthesis is necessary for the production of oxidized mitochondrial DNA fragments after exposure to NLRP3 activators. In turn, cytosolic oxidized mtDNA associates with the NLRP3 inflammasome complex and is required for its activation. This chain is UMP-CMP kinase 2, mitochondrial (Cmpk2), found in Mus musculus (Mouse).